We begin with the raw amino-acid sequence, 323 residues long: MAEAAITRYWCHECEQAIEEAMVDEIKCPSCGGGFVEEMTDEEIERLTNRQPEPGFSQWNPIEHPGETMDSDDEDNDLGREFEGFIRRHRRASTLRRVLDSIHDDLADDQERDSSILINAFNQALALQGSVLDPDEGQGDQGGSTNDDGLLEEYVLGAGLSLLLQHLAESDPSRNGTPPAKKEAVEALPTVKIEEVVSCSVCLDDLEVGSQAKQMPCEHKFHSSCILPWLELHSSCPVCRFELPSEETKDLNEPSNIGRVEDSHEEVRADGPGNVSESSNRPWAIVPWLNELFSTREAQNAGGVSTDQQSPHTSGTNPNAGHS.

The segment at 199-240 (CSVCLDDLEVGSQAKQMPCEHKFHSSCILPWLELHSSCPVCR) adopts an RING-type; atypical zinc-finger fold. 2 disordered regions span residues 248–280 (TKDLNEPSNIGRVEDSHEEVRADGPGNVSESSN) and 296–323 (REAQNAGGVSTDQQSPHTSGTNPNAGHS). Residues 259–269 (RVEDSHEEVRA) show a composition bias toward basic and acidic residues.

It localises to the cytoplasm. It catalyses the reaction S-ubiquitinyl-[E2 ubiquitin-conjugating enzyme]-L-cysteine + [acceptor protein]-L-lysine = [E2 ubiquitin-conjugating enzyme]-L-cysteine + N(6)-ubiquitinyl-[acceptor protein]-L-lysine.. It participates in protein modification; protein ubiquitination. Possesses E3 ubiqutin-protein ligase activity in vitro. Acts as negative regulator of salinity stress tolerance mediated by the ubiquitin-proteasome degradation pathway. This Oryza sativa subsp. japonica (Rice) protein is E3 ubiquitin-protein ligase SIRP1.